The primary structure comprises 238 residues: Ubiquinone biosynthesis O-methyltransferase (238 aa).

Arg-38, Gly-58, Asp-79, and Met-124 together coordinate S-adenosyl-L-methionine.

This sequence belongs to the methyltransferase superfamily. UbiG/COQ3 family.

The enzyme catalyses a 3-demethylubiquinol + S-adenosyl-L-methionine = a ubiquinol + S-adenosyl-L-homocysteine + H(+). The catalysed reaction is a 3-(all-trans-polyprenyl)benzene-1,2-diol + S-adenosyl-L-methionine = a 2-methoxy-6-(all-trans-polyprenyl)phenol + S-adenosyl-L-homocysteine + H(+). It participates in cofactor biosynthesis; ubiquinone biosynthesis. Its function is as follows. O-methyltransferase that catalyzes the 2 O-methylation steps in the ubiquinone biosynthetic pathway. The sequence is that of Ubiquinone biosynthesis O-methyltransferase from Acinetobacter baylyi (strain ATCC 33305 / BD413 / ADP1).